The sequence spans 121 residues: Basic phospholipase A2 BmTX-I (121 aa).

Intrachain disulfides connect C26-C114, C28-C45, C44-C95, C50-C121, C51-C88, C58-C82, and C76-C86. Residues Y27, G29, and G31 each coordinate Ca(2+). H48 is an active-site residue. D49 provides a ligand contact to Ca(2+). Residue D89 is part of the active site.

Ca(2+) is required as a cofactor. Expressed by the venom gland.

The protein resides in the secreted. The enzyme catalyses a 1,2-diacyl-sn-glycero-3-phosphocholine + H2O = a 1-acyl-sn-glycero-3-phosphocholine + a fatty acid + H(+). Its activity is regulated as follows. Inhibited by magnesium, cadmium and manganese ions. Also inhibited by crotapotin. Its function is as follows. Snake venom phospholipase A2 (PLA2) that shows enzymatic activity in the presence of a synthetic substrate. In vitro, blocks the neuromuscular transmission in young chick biventer cervicis preparations. In mice, induces myonecrosis and a systemic interleukin-6 response upon intramuscular injection. Also induces edema and exerts a strong pro-inflammatory effect. PLA2 catalyzes the calcium-dependent hydrolysis of the 2-acyl groups in 3-sn-phosphoglycerides. The chain is Basic phospholipase A2 BmTX-I from Bothrops moojeni (Lance-headed viper).